A 351-amino-acid polypeptide reads, in one-letter code: Ferrochelatase (351 aa).

Fe cation contacts are provided by His220 and Glu301.

This sequence belongs to the ferrochelatase family.

Its subcellular location is the cytoplasm. The catalysed reaction is heme b + 2 H(+) = protoporphyrin IX + Fe(2+). It participates in porphyrin-containing compound metabolism; protoheme biosynthesis; protoheme from protoporphyrin-IX: step 1/1. In terms of biological role, catalyzes the ferrous insertion into protoporphyrin IX. In Rhodobacter capsulatus (Rhodopseudomonas capsulata), this protein is Ferrochelatase.